The primary structure comprises 281 residues: Ribosomal protein L11 methyltransferase (281 aa).

The S-adenosyl-L-methionine site is built by Thr-133, Gly-154, Asp-175, and Asn-216.

This sequence belongs to the methyltransferase superfamily. PrmA family.

Its subcellular location is the cytoplasm. The catalysed reaction is L-lysyl-[protein] + 3 S-adenosyl-L-methionine = N(6),N(6),N(6)-trimethyl-L-lysyl-[protein] + 3 S-adenosyl-L-homocysteine + 3 H(+). Methylates ribosomal protein L11. This is Ribosomal protein L11 methyltransferase from Campylobacter jejuni subsp. jejuni serotype O:23/36 (strain 81-176).